Consider the following 306-residue polypeptide: Lipoyl synthase (306 aa).

[4Fe-4S] cluster-binding residues include cysteine 55, cysteine 60, cysteine 66, cysteine 81, cysteine 85, cysteine 88, and serine 294. The Radical SAM core domain maps to 67 to 283; sequence WNHRTATFLL…RSYALARGFT (217 aa).

Belongs to the radical SAM superfamily. Lipoyl synthase family. Requires [4Fe-4S] cluster as cofactor.

The protein localises to the cytoplasm. The enzyme catalyses [[Fe-S] cluster scaffold protein carrying a second [4Fe-4S](2+) cluster] + N(6)-octanoyl-L-lysyl-[protein] + 2 oxidized [2Fe-2S]-[ferredoxin] + 2 S-adenosyl-L-methionine + 4 H(+) = [[Fe-S] cluster scaffold protein] + N(6)-[(R)-dihydrolipoyl]-L-lysyl-[protein] + 4 Fe(3+) + 2 hydrogen sulfide + 2 5'-deoxyadenosine + 2 L-methionine + 2 reduced [2Fe-2S]-[ferredoxin]. It participates in protein modification; protein lipoylation via endogenous pathway; protein N(6)-(lipoyl)lysine from octanoyl-[acyl-carrier-protein]: step 2/2. Catalyzes the radical-mediated insertion of two sulfur atoms into the C-6 and C-8 positions of the octanoyl moiety bound to the lipoyl domains of lipoate-dependent enzymes, thereby converting the octanoylated domains into lipoylated derivatives. The polypeptide is Lipoyl synthase (Chloroflexus aurantiacus (strain ATCC 29364 / DSM 637 / Y-400-fl)).